The sequence spans 201 residues: Probable GTP-binding protein EngB (201 aa).

In terms of domain architecture, EngB-type G spans 21 to 191 (PEAQIALAGR…WQELARAAGV (171 aa)). GTP is bound by residues 29–36 (GRSNVGKS), 56–60 (GKTRS), 75–78 (DLPG), 142–145 (TKAD), and 168–172 (VLTSS). Mg(2+) contacts are provided by S36 and T58.

The protein belongs to the TRAFAC class TrmE-Era-EngA-EngB-Septin-like GTPase superfamily. EngB GTPase family. Requires Mg(2+) as cofactor.

Functionally, necessary for normal cell division and for the maintenance of normal septation. This Desulfovibrio desulfuricans (strain ATCC 27774 / DSM 6949 / MB) protein is Probable GTP-binding protein EngB.